The chain runs to 658 residues: Alkyldihydroxyacetonephosphate synthase, peroxisomal (658 aa).

Low complexity predominate over residues 1–24 (MAEAAAAAAAAAAAGETSASSGSA). Residues 1–37 (MAEAAAAAAAAAAAGETSASSGSAAERDPDQDRAGRR) are disordered. Residues 1–58 (MAEAAAAAAAAAAAGETSASSGSAAERDPDQDRAGRRLRVLSGHLLGRPQEALSTNEC) constitute a peroxisome transit peptide. Residues 25–35 (AERDPDQDRAG) show a composition bias toward basic and acidic residues. Position 65 is a phosphoserine (S65). T74 bears the Phosphothreonine mark. K102 is subject to N6-acetyllysine. Residues 202–384 (FERIPDIVLW…TEATIKIRPT (183 aa)) form the FAD-binding PCMH-type domain. Residues 234–240 (PIGGGTS), 303–309 (DSLEFST), and 316–319 (TRAS) contribute to the FAD site. K347 bears the N6-acetyllysine mark. Residue 368–374 (EGTLGVI) coordinates FAD. Substrate is bound at residue R515. Y578 serves as the catalytic Proton donor/acceptor. 2 important for enzyme activity regions span residues 615-617 (HHH) and 654-658 (NRNLL).

This sequence belongs to the FAD-binding oxidoreductase/transferase type 4 family. Homodimer. Requires FAD as cofactor.

The protein resides in the peroxisome membrane. Its subcellular location is the peroxisome. It carries out the reaction a long chain fatty alcohol + a 1-acylglycerone 3-phosphate = a 1-O-alkylglycerone 3-phosphate + a long-chain fatty acid + H(+). The enzyme catalyses hexadecan-1-ol + 1-hexadecanoylglycerone 3-phosphate = 1-O-hexadecylglycerone 3-phosphate + hexadecanoate + H(+). The catalysed reaction is 1-hexadecanoylglycerone 3-phosphate + a long-chain fatty acid = a 1-acylglycerone 3-phosphate + hexadecanoate. It functions in the pathway glycerolipid metabolism; ether lipid biosynthesis. Its activity is regulated as follows. Inhibited by N-ethylmaleimide, p-bromophenacylbromide, 2,4- dinitrofluorobenzene and divalent cations such as such as Mn(2+), Mg(2+) and Zn(2+). Inhibition by p-bromophenacylbromide is strongly pH dependent and is highest at alkaline conditions. Catalyzes the exchange of the acyl chain in acyl-dihydroxyacetonephosphate (acyl-DHAP) for a long chain fatty alcohol, yielding the first ether linked intermediate, i.e. alkyl-dihydroxyacetonephosphate (alkyl-DHAP), in the pathway of ether lipid biosynthesis. This Cavia porcellus (Guinea pig) protein is Alkyldihydroxyacetonephosphate synthase, peroxisomal (AGPS).